The sequence spans 201 residues: MKILYFIFVIIINILLILNHVKSKYNTFIFENTDGFPECNREVPIDKCTLFCGRLFGGLSYDSEKLIFYEGENCYTMIHGEFLCSDTERTSFRMDNYLADDESWYKAFFNYLVNCTWDEKNTPETPSPTENAPNTSGGSSEGNHYTYKSSSSSSEHINDIPTYSHSGYGNYGEDPQRNIGISLSSSLIFISILFLIIFINN.

The first 23 residues, 1-23 (MKILYFIFVIIINILLILNHVKS), serve as a signal peptide directing secretion. At 24–178 (KYNTFIFENT…GNYGEDPQRN (155 aa)) the chain is on the extracellular side. Residues Asn114 and Asn134 are each glycosylated (N-linked (GlcNAc...) asparagine). The disordered stretch occupies residues 122–157 (TPETPSPTENAPNTSGGSSEGNHYTYKSSSSSSEHI). Over residues 123–148 (PETPSPTENAPNTSGGSSEGNHYTYK) the composition is skewed to polar residues. The helical transmembrane segment at 179-199 (IGISLSSSLIFISILFLIIFI) threads the bilayer. Residues 200–201 (NN) are Cytoplasmic-facing.

The protein resides in the membrane. This is an uncharacterized protein from Dictyostelium discoideum (Social amoeba).